The primary structure comprises 494 residues: Glycerol kinase 1 (494 aa).

Position 12 (Thr12) interacts with ADP. Positions 12, 13, and 14 each coordinate ATP. Sn-glycerol 3-phosphate is bound at residue Thr12. Residue Arg16 participates in ADP binding. Sn-glycerol 3-phosphate is bound by residues Arg82, Glu83, Tyr134, and Asp243. Glycerol is bound by residues Arg82, Glu83, Tyr134, Asp243, and Gln244. 2 residues coordinate ADP: Thr265 and Gly308. ATP-binding residues include Thr265, Gly308, Gln312, and Gly408. Gly408 and Asn412 together coordinate ADP.

It belongs to the FGGY kinase family.

The catalysed reaction is glycerol + ATP = sn-glycerol 3-phosphate + ADP + H(+). The protein operates within polyol metabolism; glycerol degradation via glycerol kinase pathway; sn-glycerol 3-phosphate from glycerol: step 1/1. Its activity is regulated as follows. Inhibited by fructose 1,6-bisphosphate (FBP). In terms of biological role, key enzyme in the regulation of glycerol uptake and metabolism. Catalyzes the phosphorylation of glycerol to yield sn-glycerol 3-phosphate. This Pseudomonas aeruginosa (strain ATCC 15692 / DSM 22644 / CIP 104116 / JCM 14847 / LMG 12228 / 1C / PRS 101 / PAO1) protein is Glycerol kinase 1.